A 254-amino-acid chain; its full sequence is Nickel import ATP-binding protein NikD (254 aa).

Positions 2-241 (PQQIELRNIA…PKHAVTRSLV (240 aa)) constitute an ABC transporter domain. Residue 36 to 43 (GGSGSGKS) participates in ATP binding.

The protein belongs to the ABC transporter superfamily. Nickel importer (TC 3.A.1.5.3) family. In terms of assembly, the complex is composed of two ATP-binding proteins (NikD and NikE), two transmembrane proteins (NikB and NikC) and a solute-binding protein (NikA).

Its subcellular location is the cell inner membrane. The enzyme catalyses Ni(2+)(out) + ATP + H2O = Ni(2+)(in) + ADP + phosphate + H(+). Part of the ABC transporter complex NikABCDE involved in nickel import. Responsible for energy coupling to the transport system. The polypeptide is Nickel import ATP-binding protein NikD (Shigella sonnei (strain Ss046)).